We begin with the raw amino-acid sequence, 261 residues long: HTH-type transcriptional repressor CsqR (261 aa).

The HTH deoR-type domain maps to 8 to 63; the sequence is GNPRHDQLLMLIAERGYMNIDELANLLDVSTQTVRRDIRKLSEQGLITRHHGGAGR. A DNA-binding region (H-T-H motif) is located at residues 25-44; that stretch reads MNIDELANLLDVSTQTVRRD.

Monomer in the absence of DNA. Exhibits a high level of cooperativity once it is bound to its target DNA.

Its activity is regulated as follows. Inactivated in the presence of the effectors sulfoquinovose and sulfoquinovosyl glycerol, leading to the de-repression of the target genes. Functionally, involved in the regulation of the sulfoquinovose operon. Represses the expression of the yihUTS operon and of the yihV and csqR genes. Binds DNA inside the spacer between the bidirectional transcription units comprising the yihUTS operon and the yihV gene, and upstream the csqR gene itself. This chain is HTH-type transcriptional repressor CsqR, found in Escherichia coli (strain K12).